Here is a 756-residue protein sequence, read N- to C-terminus: Membrane-anchored protein 1 (756 aa).

Residues 1–24 (MIRNTLAFLAILFLLIPTALLIIG) form the signal peptide. N-linked (GlcNAc...) asparagine glycosylation is found at Asn-52 and Asn-64. Helical transmembrane passes span 91–111 (IISAFLSFLSAIFVFFSIFLV), 120–140 (IIVVFITTLLTCLAFAIELVL), and 148–168 (QSYVTAGAIGSDLIAILALCL). A glycan (N-linked (GlcNAc...) asparagine) is linked at Asn-190. Residues 281 to 328 (YDEFRKSESSPSRSSVLSTSKPEVHETEGYCPHKTGNRPGFPSLNIPR) are disordered. Over residues 289 to 300 (SSPSRSSVLSTS) the composition is skewed to low complexity. 2 N-linked (GlcNAc...) asparagine glycosylation sites follow: Asn-396 and Asn-407. The disordered stretch occupies residues 427-453 (EPPATRMPQTRSPVNDHSSFPSDLPIK). Polar residues predominate over residues 433 to 447 (MPQTRSPVNDHSSFP). Ser-438 carries the post-translational modification Phosphoserine. Asn-459, Asn-470, Asn-471, Asn-496, Asn-497, Asn-521, Asn-522, Asn-547, Asn-548, Asn-573, Asn-574, Asn-594, Asn-598, Asn-599, Asn-618, Asn-623, Asn-649, Asn-664, Asn-676, and Asn-685 each carry an N-linked (GlcNAc...) asparagine glycan. The tract at residues 482 to 650 (MLKNVGNGPR…MPTSPNSRNN (169 aa)) is disordered. Positions 485-520 (NVGNGPRNAPRNNSSNNLHAQGGMPMNMRGPRGAPR) are enriched in low complexity. Composition is skewed to polar residues over residues 593-605 (RNTSRNNSSSEFN), 617-629 (RNASRSNSSTDLF), and 640-650 (GMPTSPNSRNN). Residues 686-697 (GSRNPSHGSLNT) show a composition bias toward polar residues. Residues 686–713 (GSRNPSHGSLNTAHAGMGYGPRSMMRDP) form a disordered region. A glycan (N-linked (GlcNAc...) asparagine) is linked at Asn-715. The segment at 735-756 (FELPVRGNRNNRRGPGGNRMIR) is disordered.

To yeast YOL019W and YMR063W.

Its subcellular location is the cell membrane. The protein resides in the cell tip. In terms of biological role, required for correct cell separation at high temperatures. The polypeptide is Membrane-anchored protein 1 (mac1) (Schizosaccharomyces pombe (strain 972 / ATCC 24843) (Fission yeast)).